A 183-amino-acid chain; its full sequence is uncharacterized protein (183 aa).

The chain crosses the membrane as a helical span at residues 153–175 (LLYVFIRLFAGCLKVFRLCILWL).

The protein resides in the membrane. This is an uncharacterized protein from Saccharomyces cerevisiae (strain ATCC 204508 / S288c) (Baker's yeast).